The following is a 225-amino-acid chain: UPF0758 protein AZOSEA04420 (225 aa).

The 124-residue stretch at 102-225 (VFESPLAVRN…PLSFAERGLL (124 aa)) folds into the MPN domain. Positions 173, 175, and 186 each coordinate Zn(2+). Positions 173 to 186 (HNHPSGAAEPSPAD) match the JAMM motif motif.

The protein belongs to the UPF0758 family.

The sequence is that of UPF0758 protein AZOSEA04420 from Aromatoleum aromaticum (strain DSM 19018 / LMG 30748 / EbN1) (Azoarcus sp. (strain EbN1)).